We begin with the raw amino-acid sequence, 195 residues long: Probable GTP-binding protein EngB (195 aa).

Positions 22–194 (LKGEVAFVGR…LDLISTLLKE (173 aa)) constitute an EngB-type G domain. GTP is bound by residues 30 to 37 (GRSNVGKS), 56 to 60 (GKTRS), 74 to 77 (DLPG), 141 to 144 (TKMD), and 173 to 175 (TSS). Serine 37 and threonine 58 together coordinate Mg(2+).

It belongs to the TRAFAC class TrmE-Era-EngA-EngB-Septin-like GTPase superfamily. EngB GTPase family. Mg(2+) serves as cofactor.

Functionally, necessary for normal cell division and for the maintenance of normal septation. The protein is Probable GTP-binding protein EngB of Thermotoga petrophila (strain ATCC BAA-488 / DSM 13995 / JCM 10881 / RKU-1).